The primary structure comprises 834 residues: Copper-exporting P-type ATPase (834 aa).

Residues S2–R186 lie on the Cytoplasmic side of the membrane. 2 HMA domains span residues Q3–S64 and D99–E162. The Cu(+) site is built by C14, C17, C110, and C113. 2 short sequence motifs (CXXC motif) span residues C14–C17 and C110–C113. Residues W187–D207 form a helical membrane-spanning segment. The Periplasmic; loop 1 portion of the chain corresponds to N208–S217. A helical transmembrane segment spans residues L218–Y238. The Cytoplasmic segment spans residues R239–D253. A helical transmembrane segment spans residues T254–P274. Residues Q275–H283 are Periplasmic; loop 2-facing. Residues L284–A304 form a helical membrane-spanning segment. The Cytoplasmic portion of the chain corresponds to R305 to S437. The helical transmembrane segment at A438–F458 threads the bilayer. Topologically, residues G459–Q463 are periplasmic; loop 3. The helical transmembrane segment at I464–G484 threads the bilayer. Over L485–L778 the chain is Cytoplasmic. The active-site 4-aspartylphosphate intermediate is the D523. Residues D720 and D724 each contribute to the Mg(2+) site. Residues L779–F799 traverse the membrane as a helical segment. Residue T800 is a topological domain, periplasmic; loop 4. Residues G801–V821 traverse the membrane as a helical segment. Residues S822–E834 are Cytoplasmic-facing.

Belongs to the cation transport ATPase (P-type) (TC 3.A.3) family. Type IB subfamily. Copper-exporting P-type ATPase interacts with apo-periplasmic copper chaperone CusF; when CusF is precharged with copper it binds very little CopA. The periplasmic loops of CopA, especially the first half of loop 1, play a large role in binding to CusF.

Its subcellular location is the cell inner membrane. The protein localises to the cytoplasm. It carries out the reaction Cu(+)(in) + ATP + H2O = Cu(+)(out) + ADP + phosphate + H(+). Export is inhibited by vanadate. Phosphorylation is inhibited by vanadate and sensitive to KOH and hydroxylamine; it is not inhibited by azide. Phosphorylation is Cu(+) not Cu(2+)-dependent. ATPase activity is inhibited by bathocuproindisulfonate (BCDS), which chelates Cu(+) but not Cu(2+), and stimulated 3-4-fold by Cu(+). ATPase activity is inhibited by Cu(2+) plus DTT or Ag(+). In terms of biological role, exports Cu(+) from the cytoplasm to the periplasm. Binds 2 Cu(+) ions per monomer, which are transferred to periplasmic copper chaperone CusF upon ATP hydrolysis. In vitro an excess of CusF over CopA is required for efficient transfer. May also be involved in silver export. MRNA is subject to programmed ribosomal frameshifting which produces a cytoplasmic copper chaperone CopA(Z) that corresponds to the first HMA domain. The soluble form is essential for cell survivial in the presence of CuSO(4); in growth competition experiments between wild-type and a version that prevents expression of CopA(Z) after 50 generations the non-CopA(Z) version is nearly extinct. The first HMA domain (residues 1-70) can be replaced by B.subtilis Cu chaperone CopZ. The chain is Copper-exporting P-type ATPase from Escherichia coli (strain K12).